We begin with the raw amino-acid sequence, 171 residues long: ATP synthase subunit b (171 aa).

The chain crosses the membrane as a helical span at residues 2 to 22; the sequence is FLVKMVLGFLILLSPLCATGL.

Belongs to the ATPase B chain family. As to quaternary structure, F-type ATPases have 2 components, F(1) - the catalytic core - and F(0) - the membrane proton channel. F(1) has five subunits: alpha(3), beta(3), gamma(1), delta(1), epsilon(1). F(0) has three main subunits: a(1), b(2) and c(10-14). The alpha and beta chains form an alternating ring which encloses part of the gamma chain. F(1) is attached to F(0) by a central stalk formed by the gamma and epsilon chains, while a peripheral stalk is formed by the delta and b chains.

It localises to the cell inner membrane. Functionally, f(1)F(0) ATP synthase produces ATP from ADP in the presence of a proton or sodium gradient. F-type ATPases consist of two structural domains, F(1) containing the extramembraneous catalytic core and F(0) containing the membrane proton channel, linked together by a central stalk and a peripheral stalk. During catalysis, ATP synthesis in the catalytic domain of F(1) is coupled via a rotary mechanism of the central stalk subunits to proton translocation. In terms of biological role, component of the F(0) channel, it forms part of the peripheral stalk, linking F(1) to F(0). In Helicobacter pylori (strain HPAG1), this protein is ATP synthase subunit b.